The sequence spans 459 residues: ATP synthase subunit beta 1 (459 aa).

An ATP-binding site is contributed by 148 to 155 (GGAGVGKT).

Belongs to the ATPase alpha/beta chains family. F-type ATPases have 2 components, CF(1) - the catalytic core - and CF(0) - the membrane proton channel. CF(1) has five subunits: alpha(3), beta(3), gamma(1), delta(1), epsilon(1). CF(0) has three main subunits: a(1), b(2) and c(9-12). The alpha and beta chains form an alternating ring which encloses part of the gamma chain. CF(1) is attached to CF(0) by a central stalk formed by the gamma and epsilon chains, while a peripheral stalk is formed by the delta and b chains.

The protein resides in the cell inner membrane. The catalysed reaction is ATP + H2O + 4 H(+)(in) = ADP + phosphate + 5 H(+)(out). Produces ATP from ADP in the presence of a proton gradient across the membrane. The catalytic sites are hosted primarily by the beta subunits. This chain is ATP synthase subunit beta 1, found in Nitrosospira multiformis (strain ATCC 25196 / NCIMB 11849 / C 71).